We begin with the raw amino-acid sequence, 475 residues long: Ribulose bisphosphate carboxylase large chain (475 aa).

The propeptide occupies 1 to 2 (MS). At Pro-3 the chain carries N-acetylproline. Lys-14 carries the post-translational modification N6,N6,N6-trimethyllysine. Positions 123 and 173 each coordinate substrate. Lys-175 acts as the Proton acceptor in catalysis. Position 177 (Lys-177) interacts with substrate. 3 residues coordinate Mg(2+): Lys-201, Asp-203, and Glu-204. Lys-201 carries the N6-carboxylysine modification. The active-site Proton acceptor is His-294. Substrate contacts are provided by Arg-295, His-327, and Ser-379.

Belongs to the RuBisCO large chain family. Type I subfamily. Heterohexadecamer of 8 large chains and 8 small chains; disulfide-linked. The disulfide link is formed within the large subunit homodimers. Requires Mg(2+) as cofactor. Post-translationally, the disulfide bond which can form in the large chain dimeric partners within the hexadecamer appears to be associated with oxidative stress and protein turnover.

It is found in the plastid. The protein localises to the chloroplast. It catalyses the reaction 2 (2R)-3-phosphoglycerate + 2 H(+) = D-ribulose 1,5-bisphosphate + CO2 + H2O. It carries out the reaction D-ribulose 1,5-bisphosphate + O2 = 2-phosphoglycolate + (2R)-3-phosphoglycerate + 2 H(+). In terms of biological role, ruBisCO catalyzes two reactions: the carboxylation of D-ribulose 1,5-bisphosphate, the primary event in carbon dioxide fixation, as well as the oxidative fragmentation of the pentose substrate in the photorespiration process. Both reactions occur simultaneously and in competition at the same active site. In Piper cenocladum (Ant piper), this protein is Ribulose bisphosphate carboxylase large chain.